Here is a 204-residue protein sequence, read N- to C-terminus: Peroxynitrite isomerase (204 aa).

Residues 21 to 27 (GEWEGSG) carry the GXWXGXG motif. His195 contacts heme b.

This sequence belongs to the nitrobindin family. Homodimer. It depends on heme b as a cofactor.

The catalysed reaction is peroxynitrite = nitrate. It functions in the pathway nitrogen metabolism. In terms of biological role, heme-binding protein able to scavenge peroxynitrite and to protect free L-tyrosine against peroxynitrite-mediated nitration, by acting as a peroxynitrite isomerase that converts peroxynitrite to nitrate. Therefore, this protein likely plays a role in peroxynitrite sensing and in the detoxification of reactive nitrogen and oxygen species (RNS and ROS, respectively). Is able to bind nitric oxide (NO) in vitro, but may act as a sensor of peroxynitrite levels in vivo. In Arthrobacter sp. (strain FB24), this protein is Peroxynitrite isomerase.